The following is a 185-amino-acid chain: MVAARVSEVKAEGVLRGACAALAAAAALLVGLSTQTETVLLVRKKATVKDVQALWVLAMAAAAAAGYHLLQLLKCFYLGRRVGGGASPCRRSSRALAWTCLLLDKACAYTTFATTVAAAQACVIALDGAHALQWTKLCNIYTRFCEQIAGSLVLGMLAAVGTAVLSAASARNVFRHYSPGTYAAH.

Residues 1 to 12 (MVAARVSEVKAE) lie on the Cytoplasmic side of the membrane. The chain crosses the membrane as a helical span at residues 13–33 (GVLRGACAALAAAAALLVGLS). The Extracellular portion of the chain corresponds to 34-52 (TQTETVLLVRKKATVKDVQ). A helical transmembrane segment spans residues 53–73 (ALWVLAMAAAAAAGYHLLQLL). Residues 74–105 (KCFYLGRRVGGGASPCRRSSRALAWTCLLLDK) lie on the Cytoplasmic side of the membrane. The chain crosses the membrane as a helical span at residues 106–126 (ACAYTTFATTVAAAQACVIAL). The Extracellular segment spans residues 127–147 (DGAHALQWTKLCNIYTRFCEQ). A helical transmembrane segment spans residues 148–168 (IAGSLVLGMLAAVGTAVLSAA). The Cytoplasmic portion of the chain corresponds to 169–185 (SARNVFRHYSPGTYAAH).

It belongs to the Casparian strip membrane proteins (CASP) family. In terms of assembly, homodimer and heterodimers.

It is found in the cell membrane. The sequence is that of CASP-like protein 2C1 from Sorghum bicolor (Sorghum).